Consider the following 308-residue polypeptide: Taste receptor type 2 member 107 (308 aa).

At 1 to 7 (MLNSAEG) the chain is on the extracellular side. The chain crosses the membrane as a helical span at residues 8-28 (ILLCVVTSEAVLGVLGDTYIA). Residues 29–43 (LFNCMDYAKNKKLSK) lie on the Cytoplasmic side of the membrane. A helical transmembrane segment spans residues 44-64 (IGFILIGLAISRIGVVWIIIL). Over 65–87 (QGYIQVFFPHMLTSGNITEYITY) the chain is Extracellular. Residue Asn80 is glycosylated (N-linked (GlcNAc...) asparagine). A helical membrane pass occupies residues 88-108 (IWVFLNHLSVWFVTNLNILYF). Over 109-125 (LKIANFSNSVFLWLKRR) the chain is Cytoplasmic. The chain crosses the membrane as a helical span at residues 126 to 146 (VNAVFIFLSGCLLTSWLLCFP). The Extracellular segment spans residues 147 to 180 (QMTKILQNSKMHQRNTSWVHQRKNYFLINQSVTN). N-linked (GlcNAc...) asparagine glycans are attached at residues Asn161 and Asn175. The chain crosses the membrane as a helical span at residues 181-201 (LGIFFFIIVSLITCFLLIVFL). Residues 202–232 (WRHVRQMHSDVSGFRDHSTKVHVKAMKFLIS) are Cytoplasmic-facing. The chain crosses the membrane as a helical span at residues 233-253 (FMVFFILHFVGLSIEVLCFIL). The Extracellular segment spans residues 254–258 (PQNKL). The chain crosses the membrane as a helical span at residues 259–279 (LFITGLTATCLYPCGHSIIVI). The Cytoplasmic portion of the chain corresponds to 280–308 (LGNKQLKQASLKALQQLKCCETKGNFRVK).

Belongs to the G-protein coupled receptor T2R family.

The protein resides in the membrane. Putative taste receptor which may play a role in the perception of bitterness. The chain is Taste receptor type 2 member 107 from Mus musculus (Mouse).